A 724-amino-acid polypeptide reads, in one-letter code: Methionine--tRNA ligase (724 aa).

Positions 11-21 match the 'HIGH' region motif; that stretch reads PYANGPIHAGH. C143, C146, C156, and C159 together coordinate Zn(2+). Residues 344–348 carry the 'KMSKS' region motif; it reads KFSTS. Position 347 (T347) interacts with ATP. In terms of domain architecture, tRNA-binding spans 624-724; the sequence is EFSKIDLRIG…KEVKLGAKVR (101 aa).

This sequence belongs to the class-I aminoacyl-tRNA synthetase family. MetG type 1 subfamily. Homodimer. Zn(2+) serves as cofactor.

It is found in the cytoplasm. It catalyses the reaction tRNA(Met) + L-methionine + ATP = L-methionyl-tRNA(Met) + AMP + diphosphate. Its function is as follows. Is required not only for elongation of protein synthesis but also for the initiation of all mRNA translation through initiator tRNA(fMet) aminoacylation. This Pyrococcus furiosus (strain ATCC 43587 / DSM 3638 / JCM 8422 / Vc1) protein is Methionine--tRNA ligase.